Here is a 256-residue protein sequence, read N- to C-terminus: Small ribosomal subunit protein eS1 (256 aa).

At Ala2 the chain carries N-acetylalanine; partial.

This sequence belongs to the eukaryotic ribosomal protein eS1 family. As to quaternary structure, component of the small ribosomal subunit. Mature ribosomes consist of a small (40S) and a large (60S) subunit. The 40S subunit contains about 33 different proteins and 1 molecule of RNA (18S). The 60S subunit contains about 49 different proteins and 3 molecules of RNA (25S, 5.8S and 5S).

It is found in the cytoplasm. This chain is Small ribosomal subunit protein eS1, found in Coprinopsis cinerea (strain Okayama-7 / 130 / ATCC MYA-4618 / FGSC 9003) (Inky cap fungus).